Reading from the N-terminus, the 1385-residue chain is DNA-directed RNA polymerase subunit beta'' (1385 aa).

Positions 220, 293, 300, and 303 each coordinate Zn(2+).

Belongs to the RNA polymerase beta' chain family. RpoC2 subfamily. As to quaternary structure, in plastids the minimal PEP RNA polymerase catalytic core is composed of four subunits: alpha, beta, beta', and beta''. When a (nuclear-encoded) sigma factor is associated with the core the holoenzyme is formed, which can initiate transcription. Zn(2+) serves as cofactor.

It localises to the plastid. Its subcellular location is the chloroplast. The catalysed reaction is RNA(n) + a ribonucleoside 5'-triphosphate = RNA(n+1) + diphosphate. DNA-dependent RNA polymerase catalyzes the transcription of DNA into RNA using the four ribonucleoside triphosphates as substrates. The polypeptide is DNA-directed RNA polymerase subunit beta'' (Aethionema cordifolium (Lebanon stonecress)).